Reading from the N-terminus, the 674-residue chain is Pannexin-2 (674 aa).

Residues 11 to 53 are Cytoplasmic-facing; that stretch reads MATALLAGEKLRELILPGSQDDKAGALAALLLQLKLELPFDRV. The chain crosses the membrane as a helical span at residues 54–74; sequence VTIGTVLVPILLVTLVFTKNF. Residues 75-125 lie on the Extracellular side of the membrane; the sequence is AEEPIYCYTPHNFTRDQALYARGYCWTELRDALPGVDASLWPSLFEHKFLP. Asparagine 86 is a glycosylation site (N-linked (GlcNAc...) asparagine). A helical transmembrane segment spans residues 126 to 146; it reads YALLAFAAIMYVPALGWEFLA. At 147-230 the chain is on the cytoplasmic side; that stretch reads STRLTSELNF…NFLAKLYLAR (84 aa). Residues 231–251 traverse the membrane as a helical segment; it reads HVLILLLSVVPISYLCTYYAT. Residues 252 to 295 lie on the Extracellular side of the membrane; the sequence is QKQNEFTCALGASPDGPVGSAGPTVRVSCKLPSVQLQRIIAGVD. The chain crosses the membrane as a helical span at residues 296–316; that stretch reads IVLLCFMNLIILVNLIHLFIF. At 317 to 674 the chain is on the cytoplasmic side; that stretch reads RKSNFIFDKL…PRTVVSTVEF (358 aa). Residues 394–408 are compositionally biased toward polar residues; the sequence is TTPTVRDSGIQTVDP. 2 disordered regions span residues 394–426 and 485–510; these read TTPT…VVKR and AHHY…KKHT. Serine 590 and serine 601 each carry phosphoserine.

The protein belongs to the pannexin family. In terms of assembly, forms PANX1/PANX2-heteromeric intercellular channels on coexpression in paired Xenopus oocytes. Does not form homomeric channels. S-palmitoylated in neural stem and progenitor cells. Post-translationally, cleaved by CASP3 and CASP7 during apoptosis. Cleavage has no effect on it function. Expressed in the eye, thyroid, prostate, kidney and liver. Abundantly expressed in the CNS, including hippocampus, olfactory bulb, cortex, cerebellum. Not detected in the white matter.

The protein resides in the cell membrane. Its subcellular location is the golgi apparatus membrane. It is found in the endoplasmic reticulum membrane. Structural component of the gap junctions and the hemichannels. This chain is Pannexin-2 (Panx2), found in Rattus norvegicus (Rat).